Consider the following 554-residue polypeptide: Carboxylesterase 1C (554 aa).

An N-terminal signal peptide occupies residues Met-1–Gly-18. The N-linked (GlcNAc...) asparagine glycan is linked to Asn-79. A disulfide bridge links Cys-87 with Cys-116. Ser-221 functions as the Acyl-ester intermediate in the catalytic mechanism. Cysteines 273 and 284 form a disulfide. Asn-274 and Asn-304 each carry an N-linked (GlcNAc...) asparagine glycan. Catalysis depends on Glu-342, which acts as the Charge relay system. The N-linked (GlcNAc...) asparagine glycan is linked to Asn-377. Residue His-455 is the Charge relay system of the active site. Ser-473 bears the Phosphoserine mark. Asn-478 is a glycosylation site (N-linked (GlcNAc...) asparagine). The Prevents secretion from ER signature appears at Thr-551–Lys-554.

Belongs to the type-B carboxylesterase/lipase family. In terms of tissue distribution, expressed in lung, kidney and liver.

It is found in the endoplasmic reticulum lumen. The enzyme catalyses a carboxylic ester + H2O = an alcohol + a carboxylate + H(+). Functionally, involved in the detoxification of xenobiotics and in the activation of ester and amide prodrugs. Involved in the extracellular metabolism of lung surfactant. The polypeptide is Carboxylesterase 1C (Ces1c) (Mus musculus (Mouse)).